Consider the following 503-residue polypeptide: L-amino-acid oxidase (503 aa).

The N-terminal stretch at 1 to 18 (MNVFFMFSLLFLAALGSC) is a signal peptide. Cysteines 28 and 191 form a disulfide. Residues 61-62 (MS), 81-82 (EA), Arg-89, and 105-108 (GPMR) each bind FAD. Residue Arg-108 participates in substrate binding. N-linked (GlcNAc...) asparagine glycosylation occurs at Asn-190. His-241 is a substrate binding site. Val-279 contributes to the FAD binding site. Cys-349 and Cys-430 are oxidised to a cystine. Tyr-390 serves as a coordination point for substrate. FAD is bound by residues Glu-475 and 482–487 (GWIDST). Substrate is bound at residue 482-483 (GW).

This sequence belongs to the flavin monoamine oxidase family. FIG1 subfamily. In terms of assembly, homodimer; non-covalently linked. FAD is required as a cofactor. N-glycosylated. The enzymatic activity is not affected by deglycosylation. As to expression, expressed by the venom gland.

The protein localises to the secreted. It catalyses the reaction an L-alpha-amino acid + O2 + H2O = a 2-oxocarboxylate + H2O2 + NH4(+). The catalysed reaction is L-leucine + O2 + H2O = 4-methyl-2-oxopentanoate + H2O2 + NH4(+). It carries out the reaction L-phenylalanine + O2 + H2O = 3-phenylpyruvate + H2O2 + NH4(+). The enzyme catalyses L-methionine + O2 + H2O = 4-methylsulfanyl-2-oxobutanoate + H2O2 + NH4(+). It catalyses the reaction L-isoleucine + O2 + H2O = (S)-3-methyl-2-oxopentanoate + H2O2 + NH4(+). Catalyzes an oxidative deamination of predominantly hydrophobic and aromatic L-amino acids, thus producing hydrogen peroxide that may contribute to the diverse toxic effects of this enzyme. Is highly active on L-Met, L-Leu, L-Phe and L-Ile. Exhibits diverse biological activities, such as antibacterial on both Gram-positive and Gram-negative bacteria and antiparasitic activities, as well as induction of platelet aggregation. Effects of snake L-amino oxidases on platelets are controversial, since they either induce aggregation or inhibit agonist-induced aggregation. These different effects are probably due to different experimental conditions. This protein may also have activities in hemorrhage, hemolysis, edema, and apoptosis. This Bothrops pauloensis (Neuwied's lancehead) protein is L-amino-acid oxidase.